Here is a 146-residue protein sequence, read N- to C-terminus: Acidic phospholipase A2 S13-69J (146 aa).

Residues Met1–Ala19 form the signal peptide. The propeptide occupies Ala20–Leu27. 7 cysteine pairs are disulfide-bonded: Cys38–Cys98, Cys54–Cys145, Cys56–Cys72, Cys71–Cys126, Cys78–Cys119, Cys87–Cys112, and Cys105–Cys117. Positions 55, 57, and 59 each coordinate Ca(2+). His75 is a catalytic residue. Asp76 provides a ligand contact to Ca(2+). The active site involves Asp120.

This sequence belongs to the phospholipase A2 family. Group I subfamily. D49 sub-subfamily. The cofactor is Ca(2+). Expressed by the venom gland.

Its subcellular location is the secreted. It carries out the reaction a 1,2-diacyl-sn-glycero-3-phosphocholine + H2O = a 1-acyl-sn-glycero-3-phosphocholine + a fatty acid + H(+). In terms of biological role, snake venom phospholipase A2 (PLA2) that inhibits collagen-induced platelet aggregation. PLA2 catalyzes the calcium-dependent hydrolysis of the 2-acyl groups in 3-sn-phosphoglycerides. In Austrelaps superbus (Lowland copperhead snake), this protein is Acidic phospholipase A2 S13-69J.